Here is a 163-residue protein sequence, read N- to C-terminus: Nucleotide-binding protein YajQ (163 aa).

It belongs to the YajQ family.

Nucleotide-binding protein. This chain is Nucleotide-binding protein YajQ, found in Salmonella paratyphi A (strain ATCC 9150 / SARB42).